The following is a 301-amino-acid chain: Probable alpha-L-glutamate ligase 2 (301 aa).

The ATP-grasp domain maps to 104–287 (LQLLSRKGIG…VAEPIVEYIE (184 aa)). ATP contacts are provided by residues Lys-141, 178–179 (EY), Asp-187, and 211–213 (RSN). Asp-248, Glu-260, and Asn-262 together coordinate Mg(2+). Mn(2+) contacts are provided by Asp-248, Glu-260, and Asn-262.

The protein belongs to the RimK family. Mg(2+) serves as cofactor. It depends on Mn(2+) as a cofactor.

The sequence is that of Probable alpha-L-glutamate ligase 2 from Shewanella amazonensis (strain ATCC BAA-1098 / SB2B).